A 206-amino-acid polypeptide reads, in one-letter code: Acireductone dioxygenase (206 aa).

Histidine 102, histidine 104, glutamate 108, and histidine 146 together coordinate Fe(2+). Ni(2+) is bound by residues histidine 102, histidine 104, glutamate 108, and histidine 146.

This sequence belongs to the acireductone dioxygenase (ARD) family. Monomer. Fe(2+) is required as a cofactor. The cofactor is Ni(2+).

It catalyses the reaction 1,2-dihydroxy-5-(methylsulfanyl)pent-1-en-3-one + O2 = 3-(methylsulfanyl)propanoate + CO + formate + 2 H(+). It carries out the reaction 1,2-dihydroxy-5-(methylsulfanyl)pent-1-en-3-one + O2 = 4-methylsulfanyl-2-oxobutanoate + formate + 2 H(+). It participates in amino-acid biosynthesis; L-methionine biosynthesis via salvage pathway; L-methionine from S-methyl-5-thio-alpha-D-ribose 1-phosphate: step 5/6. Functionally, catalyzes 2 different reactions between oxygen and the acireductone 1,2-dihydroxy-3-keto-5-methylthiopentene (DHK-MTPene) depending upon the metal bound in the active site. Fe-containing acireductone dioxygenase (Fe-ARD) produces formate and 2-keto-4-methylthiobutyrate (KMTB), the alpha-ketoacid precursor of methionine in the methionine recycle pathway. Ni-containing acireductone dioxygenase (Ni-ARD) produces methylthiopropionate, carbon monoxide and formate, and does not lie on the methionine recycle pathway. This is Acireductone dioxygenase from Frankia alni (strain DSM 45986 / CECT 9034 / ACN14a).